A 344-amino-acid chain; its full sequence is Uroporphyrinogen decarboxylase (344 aa).

Substrate-binding positions include 26–30, Phe-45, Asp-75, Tyr-151, Ser-206, and His-320; that span reads RQAGR.

Belongs to the uroporphyrinogen decarboxylase family. As to quaternary structure, homodimer.

Its subcellular location is the cytoplasm. It carries out the reaction uroporphyrinogen III + 4 H(+) = coproporphyrinogen III + 4 CO2. Its pathway is porphyrin-containing compound metabolism; protoporphyrin-IX biosynthesis; coproporphyrinogen-III from 5-aminolevulinate: step 4/4. Catalyzes the decarboxylation of four acetate groups of uroporphyrinogen-III to yield coproporphyrinogen-III. The polypeptide is Uroporphyrinogen decarboxylase (Staphylococcus haemolyticus (strain JCSC1435)).